The sequence spans 599 residues: Cytadherence high molecular weight protein 3 (599 aa).

Over residues 220 to 236 the composition is skewed to polar residues; that stretch reads VQVDSGSQNHSFNNSPS. The tract at residues 220–241 is disordered; sequence VQVDSGSQNHSFNNSPSLKPPL.

It localises to the cell projection. The protein localises to the attachment organelle membrane. Component of the cytoskeleton-like structure which stabilizes the shape of the wall-less mycoplasma. This cytoskeleton-like network of accessory proteins containing HMW proteins 1 to 5 allows the proper anchoring of cytadhesin proteins in the mycoplasmal membrane at the attachment organelle. Essential for successful surface parasitism. The chain is Cytadherence high molecular weight protein 3 (hmw3) from Mycoplasma genitalium (strain ATCC 33530 / DSM 19775 / NCTC 10195 / G37) (Mycoplasmoides genitalium).